The chain runs to 679 residues: MFERNQKTIFVLDHTRYFSISSEQYISMDYLKGKPVAESPGSGSSIVGTQLSKSLWTCAVESSIEYCRIVWDLFPGKKHVRFIVSDTAAHIVNTWSPSTQNMSHVSNAMMMVSVPSRSIPQSSDYSVIHGLRAAIEALAEPTDEQLQAAHAGCKRIGNKGRVICITSARDNTSMKSLEDIFNTVLIQQNALVAPPSKKGLQIDHCHLVILNIVPLGVESLVTNRSLLEISPFLNAEIHTVNAPEISDKLLHLIMGHYDLASTTVTNIPMKEEQNANSSANYDVEILHERAAHTKVCGPDFTFTTSIKPGTAYETVTLKWCTPRGCGSADLQPCVGQYNVTPVDVTSRPSSCLINFLLNGRSVLLEVPRKSGTKTTSHMLSARGGEIFVHSLSIARSAMDEAPSITDGPGGRVPDYRIPEMGQLLKMSRLVPLKTRPKGKCSQGEHLWRRMPRYFPRTANATILFNLQRQLSWLPHFLHLLVKEDMDKQDEVRCQQQIHELYKSASRGDLLPFSNSNNARLKVNKTKDQYRLFYRELEQLIQLNAHTPHHKNLLESLQSLRAAYGDASNKSDPSAAHLRSYTESPLSPERLEPTNSVNSSSSSILKASKRRMSGCGQRSLLDIISSAERSQSSKRLDFSGRLCTPLGQTAKLYPEFGNKDKEILTPGVIPSSLKDESIRS.

A coiled-coil region spans residues 519 to 541; it reads RLKVNKTKDQYRLFYRELEQLIQ. Positions 564 to 610 are disordered; sequence GDASNKSDPSAAHLRSYTESPLSPERLEPTNSVNSSSSSILKASKRR. The Nuclear localization signal (NLS) motif lies at 604-610; the sequence is LKASKRR.

It belongs to the Integrator subunit 13 family. Belongs to the multiprotein complex Integrator, at least composed of IntS1, IntS2, IntS3, IntS4, omd/IntS5, IntS6, defl/IntS7, IntS8, IntS9, IntS10, IntS11, IntS12, asun/IntS13, IntS14 and IntS15. The core complex associates with protein phosphatase 2A subunits mts/PP2A and Pp2A-29B, to form the Integrator-PP2A (INTAC) complex. Phosphorylated.

The protein resides in the nucleus. It localises to the cytoplasm. It is found in the perinuclear region. In terms of biological role, component of the integrator complex, a multiprotein complex that terminates RNA polymerase II (Pol II) transcription in the promoter-proximal region of genes. The integrator complex provides a quality checkpoint during transcription elongation by driving premature transcription termination of transcripts that are unfavorably configured for transcriptional elongation: the complex terminates transcription by (1) catalyzing dephosphorylation of the C-terminal domain (CTD) of Pol II subunit Polr2A/Rbp1 and Spt5, and (2) degrading the exiting nascent RNA transcript via endonuclease activity. The integrator complex is also involved in the 3'-end processing of the U7 snRNA, and also the spliceosomal snRNAs U1, U2, U4 and U5. The polypeptide is Protein asunder (asun) (Drosophila mojavensis (Fruit fly)).